A 931-amino-acid chain; its full sequence is MSEWVPNQDGLKQLVYVLNLSNSTSREVHDQIREELDKFHSVPDYNNYLTLIFKSNELQPHIRSVAGLVLKTNIKQYFEKMPREVQNYIKREILPVLSDPDASVRHTVGNIITNLIKKSCFSEWPELLPALNLALDSNSQDLIEGSLYTLSLLCEDSTKKLDSDDSGRALNQLIPKLIMFFKCNNADFRKKALVSISYFIISMPGALLINMEAFLKGIFSMSEDPSEAVRTNVCKTLVTLVETKIEFLLPYIKDVIQYMLHATKDKSEEVALEACEFWTAISQAEGCRDLLRDYLPVLVPILLNGMVYTEQDYEYLDQGDDSMTPDRPQDIKPFIASTKSHGSGSSGGGQDTGFVNPDNNNNSNNNNSSNNNSSNNNNNNNNEDDEEYNDDDDDDDDDGFEDEAWTIRKSSAFAIDVLSGIFPDAEYLSVTLPLIEQRMNEQNPWPVRESAILALGAIADGSKNGLAPHLSKVIPYLINTLNDPKPLVRSITCWTLSRYSYWIAQADGRDYLHPLVVNLLNRIVDNNKKVQEAACSAFATLEEEADLLLIPYLQMILVTFVNAFGKYQAKNLLILYDAISTLAKVVGNELNKPELINILVPPLLQKFNALDDSNKNLLPLLGCLNQVCSSIGAGLQNLISLFFNRSIKLIEGSLQAHYKYNNQDQKGSSSSSDQDFIVAALDLLQGLSEGIGTSIESLIPNSNLPHLLLQCMNLRGSDVLQSSFALLGDMSKFCLIHFKQYIPDYLNILTNNLYPEYLSVCNNASWAIGEIAIRMPDEVKPFVVAIRDRLISNINKVNLNRGVLENTAVTIGRLGIVSPADISPFVDKFIQCWCMAIRRKTDDIEKDSAFRGMWLIINNNPNGALRHLVYICDAVASWDKMQPDLYEAYFKLLHMYKTSMGGVWAQFYNQFPEQLREILNEKFKLNQDISQ.

19 HEAT repeats span residues 10 to 37 (GLKQLVYVLNLSNSTSREVHDQIREELD), 42 to 79 (VPDYNNYLTLIFKSNELQPHIRSVAGLVLKTNIKQYFE), 88 to 121 (YIKREILPVLSDPDASVRHTVGNIITNLIKKSCF), 127 to 164 (LLPALNLALDSNSQDLIEGSLYTLSLLCEDSTKKLDSD), 171 to 201 (NQLIPKLIMFFKCNNADFRKKALVSISYFII), 214 to 241 (FLKGIFSMSEDPSEAVRTNVCKTLVTLV), 253 to 280 (KDVIQYMLHATKDKSEEVALEACEFWTA), 296 to 421 (PVLV…LSGI), 430 to 459 (VTLPLIEQRMNEQNPWPVRESAILALGAIA), 471 to 498 (SKVIPYLINTLNDPKPLVRSITCWTLSR), 512 to 545 (LHPLVVNLLNRIVDNNKKVQEAACSAFATLEEEA), 553 to 586 (LQMILVTFVNAFGKYQAKNLLILYDAISTLAKVV), 594 to 632 (ELINILVPPLLQKFNALDDSNKNLLPLLGCLNQVCSSIG), 640 to 693 (SLFF…GIGT), 704 to 735 (LPHLLLQCMNLRGSDVLQSSFALLGDMSKFCL), 743 to 776 (PDYLNILTNNLYPEYLSVCNNASWAIGEIAIRMP), 784 to 819 (VAIRDRLISNINKVNLNRGVLENTAVTIGRLGIVSP), 827 to 860 (DKFIQCWCMAIRRKTDDIEKDSAFRGMWLIINNN), and 869 to 900 (VYICDAVASWDKMQPDLYEAYFKLLHMYKTSM). The 68-residue stretch at 32-99 (IREELDKFHS…KREILPVLSD (68 aa)) folds into the Importin N-terminal domain. Residues 317–401 (DQGDDSMTPD…DDDDDDDGFE (85 aa)) form a disordered region. Low complexity predominate over residues 358–381 (DNNNNSNNNNSSNNNSSNNNNNNN). Residues 382 to 401 (NEDDEEYNDDDDDDDDDGFE) are compositionally biased toward acidic residues.

The protein belongs to the importin beta family. Importin beta-2 subfamily. As to quaternary structure, forms a complex with an importin alpha subunit.

It localises to the cytoplasm. It is found in the nucleus envelope. Functions in nuclear protein import via a substrate-importin alpha-beta transport complex that passes though the nuclear pore complexes (NPC). Mediates docking of the substrate-importin complex to distinct nucleoporins. In Dictyostelium discoideum (Social amoeba), this protein is Transportin (tnpo).